Consider the following 216-residue polypeptide: Peroxiredoxin (216 aa).

Residues I2–I158 form the Thioredoxin domain. C46 (cysteine sulfenic acid (-SOH) intermediate) is an active-site residue. Residue R121 coordinates substrate. C205 and C211 are oxidised to a cystine.

Belongs to the peroxiredoxin family. Prx6 subfamily. In terms of assembly, homodecamer. Pentamer of dimers that assemble into a ring structure.

It localises to the cytoplasm. It catalyses the reaction a hydroperoxide + [thioredoxin]-dithiol = an alcohol + [thioredoxin]-disulfide + H2O. Its function is as follows. Thiol-specific peroxidase that catalyzes the reduction of hydrogen peroxide and organic hydroperoxides to water and alcohols, respectively. Plays a role in cell protection against oxidative stress by detoxifying peroxides. In Pyrococcus furiosus (strain ATCC 43587 / DSM 3638 / JCM 8422 / Vc1), this protein is Peroxiredoxin.